A 514-amino-acid polypeptide reads, in one-letter code: Histidine ammonia-lyase (514 aa).

Positions 147 to 149 (ASG) form a cross-link, 5-imidazolinone (Ala-Gly). S148 is subject to 2,3-didehydroalanine (Ser).

It belongs to the PAL/histidase family. Post-translationally, contains an active site 4-methylidene-imidazol-5-one (MIO), which is formed autocatalytically by cyclization and dehydration of residues Ala-Ser-Gly.

The protein resides in the cytoplasm. The catalysed reaction is L-histidine = trans-urocanate + NH4(+). Its pathway is amino-acid degradation; L-histidine degradation into L-glutamate; N-formimidoyl-L-glutamate from L-histidine: step 1/3. The protein is Histidine ammonia-lyase of Gloeobacter violaceus (strain ATCC 29082 / PCC 7421).